A 122-amino-acid polypeptide reads, in one-letter code: MIQIQSYLDVADNSGARKLMCIRVLGTGNRKYADIGDIIIAVVKEAVPNMFLKRSEVVRAVVVRTRRGLKRRNGMVLEFDDNAAVIINQEGNPRGTRIFGPVARELRECNFARVVSLAPEVL.

Belongs to the universal ribosomal protein uL14 family. As to quaternary structure, part of the 50S ribosomal subunit.

It is found in the plastid. It localises to the chloroplast. Its function is as follows. Binds to 23S rRNA. The sequence is that of Large ribosomal subunit protein uL14c from Adiantum capillus-veneris (Maidenhair fern).